Here is a 168-residue protein sequence, read N- to C-terminus: Photosystem I assembly protein Ycf3 (168 aa).

TPR repeat units follow at residues 35-68 (AFTY…EMDP), 72-105 (SYIL…NPFL), and 120-153 (GEQA…TPGN).

Belongs to the Ycf3 family.

It is found in the plastid. The protein localises to the chloroplast thylakoid membrane. Essential for the assembly of the photosystem I (PSI) complex. May act as a chaperone-like factor to guide the assembly of the PSI subunits. The polypeptide is Photosystem I assembly protein Ycf3 (Plantago lanceolata (English plantain)).